The following is a 353-amino-acid chain: Photosystem II D2 protein (353 aa).

Thr2 is subject to N-acetylthreonine. Phosphothreonine is present on Thr2. The helical transmembrane segment at 41–61 (CAYFALGGWFTGTTFVTSWYT) threads the bilayer. Position 118 (His118) interacts with chlorophyll a. The chain crosses the membrane as a helical span at residues 125–141 (GFMLRQFELARSVQLRP). Pheophytin a is bound by residues Gln130 and Asn143. Residues 153–166 (VFVSVFLIYPLGQS) form a helical membrane-spanning segment. A chlorophyll a-binding site is contributed by His198. The chain crosses the membrane as a helical span at residues 208-228 (AALLCAIHGATVENTLFEDGD). A plastoquinone is bound by residues His215 and Phe262. His215 contributes to the Fe cation binding site. His269 is a Fe cation binding site. A helical membrane pass occupies residues 279–295 (GLWMSALGVVGLALNLR).

This sequence belongs to the reaction center PufL/M/PsbA/D family. As to quaternary structure, PSII is composed of 1 copy each of membrane proteins PsbA, PsbB, PsbC, PsbD, PsbE, PsbF, PsbH, PsbI, PsbJ, PsbK, PsbL, PsbM, PsbT, PsbX, PsbY, PsbZ, Psb30/Ycf12, at least 3 peripheral proteins of the oxygen-evolving complex and a large number of cofactors. It forms dimeric complexes. The cofactor is The D1/D2 heterodimer binds P680, chlorophylls that are the primary electron donor of PSII, and subsequent electron acceptors. It shares a non-heme iron and each subunit binds pheophytin, quinone, additional chlorophylls, carotenoids and lipids. There is also a Cl(-1) ion associated with D1 and D2, which is required for oxygen evolution. The PSII complex binds additional chlorophylls, carotenoids and specific lipids..

It localises to the plastid. It is found in the chloroplast thylakoid membrane. It catalyses the reaction 2 a plastoquinone + 4 hnu + 2 H2O = 2 a plastoquinol + O2. Its function is as follows. Photosystem II (PSII) is a light-driven water:plastoquinone oxidoreductase that uses light energy to abstract electrons from H(2)O, generating O(2) and a proton gradient subsequently used for ATP formation. It consists of a core antenna complex that captures photons, and an electron transfer chain that converts photonic excitation into a charge separation. The D1/D2 (PsbA/PsbD) reaction center heterodimer binds P680, the primary electron donor of PSII as well as several subsequent electron acceptors. D2 is needed for assembly of a stable PSII complex. In Nuphar advena (Common spatterdock), this protein is Photosystem II D2 protein.